The sequence spans 66 residues: Putative alpha-neurotoxin RjAa13 (66 aa).

The LCN-type CS-alpha/beta domain maps to 1–60 (KEGYPVDWGNCKYECMSDAYCKDLCVDRKAKSGYCYKLNWSCYCEGLPDDSPIKTNGHCR). 4 disulfide bridges follow: Cys-11/Cys-59, Cys-15/Cys-35, Cys-21/Cys-42, and Cys-25/Cys-44.

The protein belongs to the long (4 C-C) scorpion toxin superfamily. Sodium channel inhibitor family. Alpha subfamily. In terms of tissue distribution, expressed by the venom gland.

It localises to the secreted. Its function is as follows. Alpha toxins bind voltage-independently at site-3 of sodium channels (Nav) and inhibits the inactivation of the activated channels, thereby blocking neuronal transmission. This is Putative alpha-neurotoxin RjAa13 from Rhopalurus junceus (Caribbean blue scorpion).